The chain runs to 833 residues: Kinesin-like protein KIFC3 (833 aa).

A disordered region spans residues 19–74 (LWRVGRAPEPEPGMARPAPAPASPAARPFPHTGPGRLRTGRGKDTPVCGDEDSSAR). Residues 30-48 (PGMARPAPAPASPAARPFP) show a composition bias toward low complexity. Coiled-coil stretches lie at residues 102–362 (LTLQ…ENLA) and 395–432 (LLQEALRSVKAEIGQAIEEVNSNNQELLRKYRRELQLR). The Kinesin motor domain occupies 445 to 768 (NIRVIARVRP…LKFAERVRSV (324 aa)). 528–535 (GQTGAGKT) contributes to the ATP binding site. Residues 786-833 (EHLEWEPACQTPQPSARAHSAPSSGTSSRPGSIRRKLQPSGKSRPLPV) are disordered. Polar residues predominate over residues 806 to 815 (APSSGTSSRP). Serine 813 and serine 817 each carry phosphoserine.

Belongs to the TRAFAC class myosin-kinesin ATPase superfamily. Kinesin family.

It localises to the cell junction. It is found in the adherens junction. Its subcellular location is the cytoplasm. The protein resides in the cytoskeleton. The protein localises to the microtubule organizing center. It localises to the centrosome. It is found in the cytoplasmic vesicle membrane. Minus-end microtubule-dependent motor protein. Involved in apically targeted transport. Required for zonula adherens maintenance. In Homo sapiens (Human), this protein is Kinesin-like protein KIFC3 (KIFC3).